The primary structure comprises 287 residues: uncharacterized protein (287 aa).

Positions 115–287 constitute an ATP-grasp domain; it reads PQNFDREWNP…NLAIELLKAI (173 aa). Residues K145 and 178–188 contribute to the ATP site; that span reads QKYITCSKGES. Residues D248, E261, and N263 each contribute to the Mg(2+) site. D248, E261, and N263 together coordinate Mn(2+).

Belongs to the RimK family.

This is an uncharacterized protein from Mycoplasma genitalium (strain ATCC 33530 / DSM 19775 / NCTC 10195 / G37) (Mycoplasmoides genitalium).